A 429-amino-acid chain; its full sequence is Zinc metalloproteinase nas-17 (429 aa).

A signal peptide spans 1–21 (MFLRPSTLLLTLFLALVAGSA). Asparagine 54 carries N-linked (GlcNAc...) asparagine glycosylation. Residues 62–251 (RQITKIWKKW…VNINVRYSCG (190 aa)) form the Peptidase M12A domain. 4 disulfides stabilise this stretch: cysteine 104-cysteine 250, cysteine 125-cysteine 144, cysteine 252-cysteine 272, and cysteine 274-cysteine 283. Residue histidine 152 participates in Zn(2+) binding. The active site involves glutamate 153. Zn(2+)-binding residues include histidine 156 and histidine 162. The EGF-like domain occupies 245–284 (NVRYSCGCAKSLTCENGGYTNPSNCATCVCPTGFAGTLCN).

Zn(2+) is required as a cofactor.

The protein resides in the secreted. In terms of biological role, metalloprotease. This chain is Zinc metalloproteinase nas-17 (nas-17), found in Caenorhabditis elegans.